The following is a 1208-amino-acid chain: Putative protease AXL1 (1208 aa).

A Zn(2+)-binding site is contributed by His68. Glu71 acts as the Proton acceptor in catalysis. His72 and Glu156 together coordinate Zn(2+). Ser262 carries the post-translational modification Phosphoserine.

It belongs to the peptidase M16 family. As to quaternary structure, interacts with BUD5. Zn(2+) is required as a cofactor.

It is found in the bud neck. Probable protease. Involved in axial budding. The protein is Putative protease AXL1 (AXL1) of Saccharomyces cerevisiae (strain ATCC 204508 / S288c) (Baker's yeast).